A 174-amino-acid chain; its full sequence is MALELAVDWRIDNILEAIILMLPAMIANATPVVAGGRRPVDMGVVLPDGRRLLGDGKTIEGLLAGFAAGSAAGVLAALASGNMLLAVHSPAIALGALAGDMAGSFVKRRLGIERGRPAPLLDQLDFYLGALAVSIALGYTWTPRVAVEAAAAVLLLHLAANITAYLLGLKKVPW.

The next 5 helical transmembrane spans lie at 14–34 (ILEA…PVVA), 59–79 (IEGL…AALA), 83–103 (MLLA…DMAG), 118–138 (APLL…IALG), and 149–169 (AAAA…LLGL).

Belongs to the CDP-archaeol synthase family. Requires Mg(2+) as cofactor.

The protein resides in the cell membrane. The enzyme catalyses 2,3-bis-O-(geranylgeranyl)-sn-glycerol 1-phosphate + CTP + H(+) = CDP-2,3-bis-O-(geranylgeranyl)-sn-glycerol + diphosphate. Its pathway is membrane lipid metabolism; glycerophospholipid metabolism. In terms of biological role, catalyzes the formation of CDP-2,3-bis-(O-geranylgeranyl)-sn-glycerol (CDP-archaeol) from 2,3-bis-(O-geranylgeranyl)-sn-glycerol 1-phosphate (DGGGP) and CTP. This reaction is the third ether-bond-formation step in the biosynthesis of archaeal membrane lipids. The polypeptide is CDP-archaeol synthase (Aeropyrum pernix (strain ATCC 700893 / DSM 11879 / JCM 9820 / NBRC 100138 / K1)).